We begin with the raw amino-acid sequence, 297 residues long: Probable ABC transporter phosphite binding protein PhnD1 (297 aa).

A signal peptide spans 1–24 (MFNLKYFLVSSSLLFSVFSSPVFS).

Belongs to the phosphate/phosphite/phosphonate binding protein family. In terms of assembly, the complex may be composed of two ATP-binding proteins (PhnC1), two transmembrane proteins (PhnE1) and a solute-binding protein (PhnD1).

Its subcellular location is the periplasm. Probably part of the ABC transporter complex PhnD1C1E1. Binds strongly to inorganic phosphite and with very weak affinities to methylphosphonate (MPn) and phosphate. The protein is Probable ABC transporter phosphite binding protein PhnD1 of Prochlorococcus marinus (strain MIT 9301).